We begin with the raw amino-acid sequence, 492 residues long: MTLWINGDWITGQGASRVKRNPVSGEVLWQGNDADAAQVGQACRAARAAFPRWARLSFAERQAVVERFAGLLERNKGELTAIIARETGKPRWEAATELTAMINKIAISIKAYHVRTGEQRSEMPDGAASLRHRPHGVLAVFGPYNFPGHLPNGHIVPALLAGNTIIFKPSELTPWSGEAVMRLWQQAGLPPGVLNLVQGGCETGQALSALEDLDGLLFTGSANTGYQLHRQLSGQPEKILALEMGGNNPLIIDEVADIDAAVHLTIQSAFVTAGQRCTCARRVLLKSGAQGDAFLARLVAVSQRLTPGNWDDEPQPFIGGLISEQAAQQVFTAWQQLEAMGGRTLLAPRLLQAGTSLLTPGIIEMTGVAGVPDEEVFGPLLRVWRYDSFEEAIRMANNTRFGLSCGLVSPEREKFDQLLLEARAGIVNWNKPLTGAASTAPFGGIGASGNHRPSAWYAADYCAWPMASLESDSLTLPATLNPGLDFSDEVVR.

Residue 220-225 (GSANTG) participates in NAD(+) binding. Catalysis depends on residues E243 and C277.

Belongs to the aldehyde dehydrogenase family. AstD subfamily.

The catalysed reaction is N-succinyl-L-glutamate 5-semialdehyde + NAD(+) + H2O = N-succinyl-L-glutamate + NADH + 2 H(+). It functions in the pathway amino-acid degradation; L-arginine degradation via AST pathway; L-glutamate and succinate from L-arginine: step 4/5. Functionally, catalyzes the NAD-dependent reduction of succinylglutamate semialdehyde into succinylglutamate. This chain is N-succinylglutamate 5-semialdehyde dehydrogenase, found in Escherichia coli O157:H7.